The chain runs to 440 residues: MSAVLVSKENNQAVFTCEIPAEDFNNAIEESYKKNRSRFSLKGFRKGKVPRKMLERAYGEGLFYEDAVNLLLPGIYEKAIEELELEPVSQPDIDLDDITENNDVKVKFTVDLKPEFELGDYSKLSAEIEEFKVTDSDVDMKVNHELESNARVQEVEGREAKENDTVSINFKGFVDDKAFDGGEAEDYELVLGSHTFIPGFEEQIVGHNAGDEFDVNVKFPEDYHEDSLKGKDAKFECKINSIKEKVLPELDDEFVKDVSEFDTLDEYKKDIKEHLEKDNEQRQLVEKQNKAVEALIEATEISVPESMIDNEVNRQFQDFARRVQQMGLNTDQYFQITNTSEEDVKNELRANAELKVKGDLVLEKYIEKEAIESTDEELDEQLKEFAKVYGKDDEEKFIEEFKNSPNVEFLKEDIKRKKALEKLVENTKFEIKKAEEKEDK.

Residues 163–248 enclose the PPIase FKBP-type domain; sequence NDTVSINFKG…INSIKEKVLP (86 aa).

Belongs to the FKBP-type PPIase family. Tig subfamily.

The protein resides in the cytoplasm. The catalysed reaction is [protein]-peptidylproline (omega=180) = [protein]-peptidylproline (omega=0). Its function is as follows. Involved in protein export. Acts as a chaperone by maintaining the newly synthesized protein in an open conformation. Functions as a peptidyl-prolyl cis-trans isomerase. This is Trigger factor from Finegoldia magna (strain ATCC 29328 / DSM 20472 / WAL 2508) (Peptostreptococcus magnus).